A 522-amino-acid polypeptide reads, in one-letter code: BTB/POZ domain-containing protein 3 (522 aa).

The interval 25–44 is disordered; that stretch reads RSKKSSKKANTSSSSSNSSK. Positions 32-44 are enriched in low complexity; it reads KANTSSSSSNSSK. The BTB domain maps to 120–190; the sequence is ADVHFVVGPP…IYCDEIDLAA (71 aa). Residues 235-300 enclose the BACK domain; it reads FEEPDLTQRC…NWAEVECQRQ (66 aa).

It localises to the cytoplasm. The protein localises to the cytosol. The protein resides in the nucleus. Functionally, acts as a key regulator of dendritic field orientation during development of sensory cortex. Also directs dendrites toward active axon terminals when ectopically expressed. This chain is BTB/POZ domain-containing protein 3 (BTBD3), found in Homo sapiens (Human).